We begin with the raw amino-acid sequence, 430 residues long: Pre-B-cell leukemia transcription factor 2 (430 aa).

Residues 1-52 (MDERLLGPPPPGGGRGGLGLVSGEPGGPGEPPGGGDPGGGSGGVPGGRGKQD) are disordered. A compositionally biased stretch (gly residues) spans 13 to 48 (GGRGGLGLVSGEPGGPGEPPGGGDPGGGSGGVPGGR). A PBC domain is found at 48–243 (RGKQDIGDIL…VMILRSRFLD (196 aa)). The interval 55 to 134 (DILQQIMTIT…EGVAGPEKGG (80 aa)) is PBC-A. Ser-136, Ser-151, and Ser-159 each carry phosphoserine. The interval 137–243 (AAAAAAAAAS…VMILRSRFLD (107 aa)) is PBC-B. A DNA-binding region (homeobox; TALE-type) is located at residues 244-306 (ARRKRRNFSK…NKRIRYKKNI (63 aa)). Disordered regions lie at residues 326 to 347 (QGGH…GGSF) and 378 to 430 (SMGP…DTSN). A Phosphoserine modification is found at Ser-330. Residues 380–392 (GPGGYGDNLGGGQ) are compositionally biased toward gly residues. Position 395 is a phosphoserine (Ser-395). Over residues 403-418 (GSWQEAVTPSSVTSPT) the composition is skewed to polar residues.

It belongs to the TALE/PBX homeobox family. As to quaternary structure, forms heterodimers with MEIS1 and heterotrimers with MEIS1 and HOXA9. Interacts with PBXIP1. Ubiquitously expressed.

The protein localises to the nucleus. Its function is as follows. Transcriptional activator that binds the sequence 5'-ATCAATCAA-3'. Activates transcription of PF4 in complex with MEIS1. This chain is Pre-B-cell leukemia transcription factor 2 (PBX2), found in Homo sapiens (Human).